Here is a 609-residue protein sequence, read N- to C-terminus: UvrABC system protein C (609 aa).

The GIY-YIG domain maps to 16-94; it reads SSPGVYRMYD…IKQYMPKYNV (79 aa). One can recognise a UVR domain in the interval 203 to 238; it reads HQVMSVLVGKMEQAASDMRYEQAALYRDQITALRRV.

This sequence belongs to the UvrC family. In terms of assembly, interacts with UvrB in an incision complex.

It localises to the cytoplasm. Its function is as follows. The UvrABC repair system catalyzes the recognition and processing of DNA lesions. UvrC both incises the 5' and 3' sides of the lesion. The N-terminal half is responsible for the 3' incision and the C-terminal half is responsible for the 5' incision. The chain is UvrABC system protein C from Shewanella halifaxensis (strain HAW-EB4).